The following is a 34-amino-acid chain: Trypsin inhibitor 1 (34 aa).

The segment at residues 1–34 (SGSDGGVCPKILQRCRRDSDCPGACICRGNGYCG) is a cross-link (cyclopeptide (Ser-Gly)). Cystine bridges form between Cys8–Cys25, Cys15–Cys27, and Cys21–Cys33.

Post-translationally, this is a cyclic peptide.

The protein resides in the secreted. Functionally, inhibits trypsin; probably participates in a plant defense mechanism. In Momordica cochinchinensis (Spiny bitter cucumber), this protein is Trypsin inhibitor 1.